Here is a 345-residue protein sequence, read N- to C-terminus: Selenide, water dikinase (345 aa).

C16 is a catalytic residue. ATP contacts are provided by residues K19 and 45–47 (TSE). Mg(2+) is bound at residue D48. ATP-binding positions include D65, D88, and 136–138 (GHT). Residue D88 participates in Mg(2+) binding. Residue D224 participates in Mg(2+) binding.

This sequence belongs to the selenophosphate synthase 1 family. Class I subfamily. As to quaternary structure, homodimer. Requires Mg(2+) as cofactor.

It carries out the reaction hydrogenselenide + ATP + H2O = selenophosphate + AMP + phosphate + 2 H(+). Synthesizes selenophosphate from selenide and ATP. In Aliarcobacter butzleri (strain RM4018) (Arcobacter butzleri), this protein is Selenide, water dikinase.